The following is a 407-amino-acid chain: Transmembrane protein 184B (407 aa).

Residues Met-1–Ser-25 are disordered. The span at Ala-9–Ser-25 shows a compositional bias: low complexity. The next 7 helical transmembrane spans lie at Phe-40–Ile-60, Ile-84–Asn-104, Leu-121–Met-141, Leu-178–Gly-198, Val-214–Phe-234, Phe-249–Leu-269, and Val-290–Leu-310. Residues Thr-369–Asn-395 are disordered. A phosphoserine mark is found at Ser-388, Ser-402, and Ser-403.

It belongs to the TMEM184 family.

It is found in the membrane. In terms of biological role, may activate the MAP kinase signaling pathway. The chain is Transmembrane protein 184B (TMEM184B) from Homo sapiens (Human).